The following is an 817-amino-acid chain: MVRKLFNTSHKKELILDVDTTIVKIGTPKNVVLLTKWLDANGAIKEEGVFRVNGNTTTMEQIKKNFSQGKDDLTKYTSADIHSMAGCLKFILRELPEPIFTWDFYPIFIKIQCLQDESRKLFFLKMLIHGLPYTSRTLVFQLFGFLSKFSVHQDQNKMTPKNLATVFAPNVLRPKKEEDNFQLMNNQDSIGVIETLIEEFQYISNIQKNTLNSQEIKVKSVLPFDETTNAITQQSLVEDYLIAKANTPQESSSFKKNLPFKKGDIIKLLYIKNDGNFIGEINGITGNLSQTYVDIIDISELAEAFTLTPPPIPTLPIASTILHTPPTSSSSSSSSSSSSILLTDNQPKLCSSTPRINNSPSSFSPSLSSTTPQLLVQQSPRQSPRQIPSISLIVEPNNTNQPSFGHGTLQRTSTGYFSSKPLSISQPINMSKPTNMSPPTHHAMSMHNLPPSNTTRENHLPPLPTKPPPLTIPSSSSLPTTPIKQQPQQPIQQPLTPQNHHHHHHHNNLSSSVNTANTGNCANILSPNSDRYLSSRSQSSVHLSGSSSSSSSSSSSSSSSSSSSSSTSNRKFDFSLKSKSSKNSPSKNLPPQPTTTSTLTPPPPPTITTTTTTTTTTTTTTIATTPPPPSKPLPNIPVKDQQFNTLKRSTIEIPPPTITSTNINNNNNTINPRTLNYSFSSFSITYNNSQLGGQLSQEEPPGGVKSQSSYLDNNNLPSRNTNIPNLPPRPPPLNIPQQQQQYKPLPSPPQLQSPQSSLNQSLQIPLQQQQQVQQQKLTTHYILPPQNTNLSGKNLQRSSTSMLLNKLPPPPFSFNKN.

Positions 20–204 (TTIVKIGTPK…TLIEEFQYIS (185 aa)) constitute a Rho-GAP domain. Residues 238 to 298 (EDYLIAKANT…SQTYVDIIDI (61 aa)) enclose the SH3 domain. The segment covering 318-339 (ASTILHTPPTSSSSSSSSSSSS) has biased composition (low complexity). Disordered stretches follow at residues 318–638 (ASTI…NIPV), 691–771 (LGGQ…QQQQ), and 783–817 (LPPQNTNLSGKNLQRSSTSMLLNKLPPPPFSFNKN). The segment covering 340-358 (ILLTDNQPKLCSSTPRINN) has biased composition (polar residues). The span at 359 to 391 (SPSSFSPSLSSTTPQLLVQQSPRQSPRQIPSIS) shows a compositional bias: low complexity. Over residues 396-438 (PNNTNQPSFGHGTLQRTSTGYFSSKPLSISQPINMSKPTNMSP) the composition is skewed to polar residues. Residues 461–471 (PPLPTKPPPLT) show a composition bias toward pro residues. A compositionally biased stretch (low complexity) spans 472–498 (IPSSSSLPTTPIKQQPQQPIQQPLTPQ). Positions 509-532 (LSSSVNTANTGNCANILSPNSDRY) are enriched in polar residues. Composition is skewed to low complexity over residues 534–568 (SSRSQSSVHLSGSSSSSSSSSSSSSSSSSSSSSTS), 577–587 (KSKSSKNSPSK), and 607–624 (ITTTTTTTTTTTTTTIAT). Residues 625–635 (TPPPPSKPLPN) show a composition bias toward pro residues. Residues 705–722 (KSQSSYLDNNNLPSRNTN) are compositionally biased toward polar residues. Residues 725 to 734 (NLPPRPPPLN) are compositionally biased toward pro residues. 2 stretches are compositionally biased toward low complexity: residues 735 to 744 (IPQQQQQYKP) and 752 to 771 (QSPQSSLNQSLQIPLQQQQQ). A compositionally biased stretch (polar residues) spans 785–803 (PQNTNLSGKNLQRSSTSML). The span at 807-817 (LPPPPFSFNKN) shows a compositional bias: pro residues.

The protein resides in the cytoplasm. In terms of biological role, rho GTPase-activating protein involved in the signal transduction pathway. The chain is Rho GTPase-activating protein gacII (gacII) from Dictyostelium discoideum (Social amoeba).